A 1041-amino-acid polypeptide reads, in one-letter code: Nuclear pore complex protein NUP98A (1041 aa).

Residues 1–34 (MFGSSNPFGQSSGTSPFGSQSLFGQTSNTSSNNP) show a composition bias toward polar residues. The interval 1–44 (MFGSSNPFGQSSGTSPFGSQSLFGQTSNTSSNNPFAPATPFGTS) is disordered. A run of 44 repeats spans residues 2–3 (FG), 8–9 (FG), 17–18 (FG), 23–24 (FG), 41–42 (FG), 56–57 (FG), 64–65 (FG), 79–80 (FG), 87–88 (FG), 94–95 (FG), 103–104 (FG), 109–110 (FG), 124–125 (FG), 135–136 (FG), 140–141 (FG), 146–147 (FG), 154–155 (FG), 162–163 (FG), 170–171 (FG), 178–179 (FG), 186–187 (FG), 194–195 (FG), 202–203 (FG), 210–211 (FG), 217–218 (FG), 222–223 (FG), 228–229 (FG), 236–237 (FG), 244–245 (FG), 252–253 (FG), 260–261 (FG), 268–269 (FG), 276–277 (FG), 284–285 (FG), 294–295 (FG), 300–301 (FG), 307–308 (FG), 312–313 (FG), 319–320 (FG), 329–330 (FG), 334–335 (FG), 339–340 (FG), 411–412 (FG), and 427–428 (FG). The interval 2-677 (FGSSNPFGQS…QPVAVTNPFG (676 aa)) is 65 X 2 AA repeats of F-G. A disordered region spans residues 98–171 (PASSPFGGSS…FGATSTPSFG (74 aa)). A compositionally biased stretch (polar residues) spans 117–171 (STPQSNPFGNSTQQSQPAFGNTSFGSSTPFGATNTPAFGAPSTPSFGATSTPSFG). Disordered regions lie at residues 315–347 (TPSPFGGAQASTPTFGGSGFGQSTFGGQQGGSR) and 392–447 (QRGD…TNPF). Low complexity predominate over residues 430-447 (TSANPTNPFSSSTSTNPF). A run of 21 repeats spans residues 459–460 (FG), 466–467 (FG), 471–472 (FG), 480–481 (FG), 491–492 (FG), 497–498 (FG), 506–507 (FG), 514–515 (FG), 521–522 (FG), 533–534 (FG), 555–556 (FG), 562–563 (FG), 565–566 (FG), 573–574 (FG), 586–587 (FG), 604–605 (FG), 627–628 (FG), 632–633 (FG), 650–651 (FG), 655–656 (FG), and 676–677 (FG). Residues 517–526 (SSSIFGSAPG) show a composition bias toward low complexity. Residues 517 to 560 (SSSIFGSAPGQGATPAFGNSQPSTLFNSTPSTGQTGSAFGQTGS) are disordered. The span at 533–560 (FGNSQPSTLFNSTPSTGQTGSAFGQTGS) shows a compositional bias: polar residues. The disordered stretch occupies residues 734–860 (KYRPGENGPK…KERPYKTLSG (127 aa)). Over residues 782–793 (SRDKSILPKEQR) the composition is skewed to basic and acidic residues. Polar residues predominate over residues 831–846 (TSVNANQKPNGTTRSD). Residues 885 to 1027 (QSDYFTEPRI…GEWKFRVEHF (143 aa)) enclose the Peptidase S59 domain.

This sequence belongs to the nucleoporin GLFG family. Part of the nuclear pore complex (NPC). The NPC has an eight-fold symmetrical structure comprising a central transport channel and two rings, the cytoplasmic and nuclear rings, to which eight filaments are attached. The cytoplasmic filaments have loose ends, while the nuclear filaments are joined in a distal ring, forming a nuclear basket. NPCs are highly dynamic in configuration and composition, and can be devided in 3 subcomplexes, the NUP62 subcomplex, the NUP107-160 subcomplex and the NUP93 subcomplex, containing approximately 30 different nucleoporin proteins.

Its subcellular location is the nucleus. The protein resides in the nuclear pore complex. The sequence is that of Nuclear pore complex protein NUP98A from Arabidopsis thaliana (Mouse-ear cress).